The following is a 530-amino-acid chain: Ubiquitin carboxyl-terminal hydrolase 17-like protein 21 (530 aa).

The USP domain maps to 80–375; sequence AGLQNMGNTC…QAYVLFYIQK (296 aa). The active-site Nucleophile is the Cys-89. His-334 functions as the Proton acceptor in the catalytic mechanism. Basic and acidic residues-rich tracts occupy residues 382–392 and 398–412; these read SESVSRGREPR and DTDR…KRDH. Disordered regions lie at residues 382–412 and 477–530; these read SESV…KRDH and NHHP…LVCQ. Polar residues predominate over residues 493-505; that stretch reads TPTHQESMNTGTL. Over residues 510–524 the composition is skewed to basic residues; it reads GRARRSKGKNKHSKR.

Belongs to the peptidase C19 family. USP17 subfamily.

It is found in the nucleus. The protein resides in the endoplasmic reticulum. It catalyses the reaction Thiol-dependent hydrolysis of ester, thioester, amide, peptide and isopeptide bonds formed by the C-terminal Gly of ubiquitin (a 76-residue protein attached to proteins as an intracellular targeting signal).. Deubiquitinating enzyme that removes conjugated ubiquitin from specific proteins to regulate different cellular processes that may include cell proliferation, progression through the cell cycle, apoptosis, cell migration, and the cellular response to viral infection. The polypeptide is Ubiquitin carboxyl-terminal hydrolase 17-like protein 21 (USP17L21) (Homo sapiens (Human)).